Here is a 326-residue protein sequence, read N- to C-terminus: Homeobox protein Hox-A1 (326 aa).

Positions 196–201 (TFDWMK) match the Antp-type hexapeptide motif. The segment at residues 221 to 280 (PNTVRTNFTTKQLTELEKEFHFNKYLTRARRVEIAAALQLNETQVKIWFQNRRMKQKKRE) is a DNA-binding region (homeobox). The segment at 273–326 (RMKQKKREKEGLTSASPATPGSEANTEDTSDKCNSTSSTPSPSSSTSETINTSG) is disordered. Polar residues predominate over residues 285–296 (TSASPATPGSEA). The segment covering 306 to 326 (NSTSSTPSPSSSTSETINTSG) has biased composition (low complexity).

It belongs to the Antp homeobox family. Labial subfamily.

The protein localises to the nucleus. Its function is as follows. Sequence-specific transcription factor. Part of a developmental regulatory system that provides cells with specific positional identities on the anterior-posterior axis. Acts on the anterior body structures. Seems to act in the maintenance and/or generation of hindbrain segments. This is Homeobox protein Hox-A1 (HOXA1) from Heterodontus francisci (Horn shark).